Here is a 582-residue protein sequence, read N- to C-terminus: Proline--tRNA ligase (582 aa).

The protein belongs to the class-II aminoacyl-tRNA synthetase family. ProS type 1 subfamily. In terms of assembly, homodimer.

The protein resides in the cytoplasm. The enzyme catalyses tRNA(Pro) + L-proline + ATP = L-prolyl-tRNA(Pro) + AMP + diphosphate. In terms of biological role, catalyzes the attachment of proline to tRNA(Pro) in a two-step reaction: proline is first activated by ATP to form Pro-AMP and then transferred to the acceptor end of tRNA(Pro). As ProRS can inadvertently accommodate and process non-cognate amino acids such as alanine and cysteine, to avoid such errors it has two additional distinct editing activities against alanine. One activity is designated as 'pretransfer' editing and involves the tRNA(Pro)-independent hydrolysis of activated Ala-AMP. The other activity is designated 'posttransfer' editing and involves deacylation of mischarged Ala-tRNA(Pro). The misacylated Cys-tRNA(Pro) is not edited by ProRS. This chain is Proline--tRNA ligase, found in Mycobacterium bovis (strain ATCC BAA-935 / AF2122/97).